The following is a 77-amino-acid chain: Small ribosomal subunit protein uS17 (77 aa).

The protein belongs to the universal ribosomal protein uS17 family. As to quaternary structure, part of the 30S ribosomal subunit.

In terms of biological role, one of the primary rRNA binding proteins, it binds specifically to the 5'-end of 16S ribosomal RNA. This chain is Small ribosomal subunit protein uS17, found in Rickettsia rickettsii (strain Sheila Smith).